A 387-amino-acid polypeptide reads, in one-letter code: Radial spoke protein 14 (387 aa).

ARM repeat units lie at residues 24–67, 69–109, 111–150, 154–198, 204–244, 245–286, 289–328, and 330–370; these read KALP…ELLS, PVNH…LLAA, EVGA…EAAR, TRRA…TCTQ, GILS…ALAT, REDA…AITI, EGKY…NVAE, and PEAR…QCRF.

The protein belongs to the flagellar radial spoke RSP14 family.

The protein localises to the cytoplasm. Its subcellular location is the cytoskeleton. The protein resides in the flagellum axoneme. The protein is Radial spoke protein 14 (RSP14) of Chlamydomonas reinhardtii (Chlamydomonas smithii).